The sequence spans 303 residues: Inosose dehydratase (303 aa).

Belongs to the IolE/MocC family. Glutathione is required as a cofactor. Requires Co(2+) as cofactor. The cofactor is Mn(2+).

The catalysed reaction is scyllo-inosose = 3D-3,5/4-trihydroxycyclohexane-1,2-dione + H2O. It participates in polyol metabolism; myo-inositol degradation into acetyl-CoA; acetyl-CoA from myo-inositol: step 2/7. Its function is as follows. Catalyzes the dehydration of inosose (2-keto-myo-inositol, 2KMI or 2,4,6/3,5-pentahydroxycyclohexanone) to 3D-(3,5/4)-trihydroxycyclohexane-1,2-dione (D-2,3-diketo-4-deoxy-epi-inositol). This chain is Inosose dehydratase, found in Halalkalibacterium halodurans (strain ATCC BAA-125 / DSM 18197 / FERM 7344 / JCM 9153 / C-125) (Bacillus halodurans).